A 555-amino-acid chain; its full sequence is CTP synthase (555 aa).

The interval 1–271 (MVKRGKKTKY…DDKLAELFNI (271 aa)) is amidoligase domain. Position 19 (serine 19) interacts with CTP. Serine 19 is a UTP binding site. ATP-binding positions include 20-25 (SLGKGL) and aspartate 77. Residues aspartate 77 and glutamate 145 each coordinate Mg(2+). CTP is bound by residues 152–154 (DIE), 192–197 (KTKPTQ), and lysine 228. UTP contacts are provided by residues 192–197 (KTKPTQ) and lysine 228. The region spanning 297–537 (RIGIVGKYVE…VKAALEHRDA (241 aa)) is the Glutamine amidotransferase type-1 domain. L-glutamine is bound at residue glycine 358. The Nucleophile; for glutamine hydrolysis role is filled by cysteine 385. L-glutamine is bound by residues 386 to 389 (LGLQ), glutamate 409, and arginine 466. Catalysis depends on residues histidine 510 and glutamate 512. Residues 535–555 (RDAQQRQPPAEVKKLAVGKNG) form a disordered region.

The protein belongs to the CTP synthase family. Homotetramer.

It catalyses the reaction UTP + L-glutamine + ATP + H2O = CTP + L-glutamate + ADP + phosphate + 2 H(+). The enzyme catalyses L-glutamine + H2O = L-glutamate + NH4(+). The catalysed reaction is UTP + NH4(+) + ATP = CTP + ADP + phosphate + 2 H(+). The protein operates within pyrimidine metabolism; CTP biosynthesis via de novo pathway; CTP from UDP: step 2/2. Its activity is regulated as follows. Allosterically activated by GTP, when glutamine is the substrate; GTP has no effect on the reaction when ammonia is the substrate. The allosteric effector GTP functions by stabilizing the protein conformation that binds the tetrahedral intermediate(s) formed during glutamine hydrolysis. Inhibited by the product CTP, via allosteric rather than competitive inhibition. In terms of biological role, catalyzes the ATP-dependent amination of UTP to CTP with either L-glutamine or ammonia as the source of nitrogen. Regulates intracellular CTP levels through interactions with the four ribonucleotide triphosphates. The protein is CTP synthase of Anaeromyxobacter dehalogenans (strain 2CP-1 / ATCC BAA-258).